Reading from the N-terminus, the 131-residue chain is Small ribosomal subunit protein uS8 (131 aa).

This sequence belongs to the universal ribosomal protein uS8 family. As to quaternary structure, part of the 30S ribosomal subunit. Contacts proteins S5 and S12.

One of the primary rRNA binding proteins, it binds directly to 16S rRNA central domain where it helps coordinate assembly of the platform of the 30S subunit. The chain is Small ribosomal subunit protein uS8 from Acholeplasma laidlawii (strain PG-8A).